We begin with the raw amino-acid sequence, 127 residues long: Methylglyoxal synthase (127 aa).

In terms of domain architecture, MGS-like spans 1-127 (MEKKIALIAH…IKGLESLILR (127 aa)). Substrate contacts are provided by residues His10, Lys14, 36-39 (TGTT), and 56-57 (SG). The active-site Proton donor/acceptor is Asp62. His89 is a binding site for substrate.

Belongs to the methylglyoxal synthase family.

It carries out the reaction dihydroxyacetone phosphate = methylglyoxal + phosphate. In terms of biological role, catalyzes the formation of methylglyoxal from dihydroxyacetone phosphate. The protein is Methylglyoxal synthase of Borreliella afzelii (strain PKo) (Borrelia afzelii).